The sequence spans 64 residues: Large ribosomal subunit protein bL33 (64 aa).

A disordered region spans residues 19–40 (TSTDPKRSNGVSRYTTEKNRRN).

This sequence belongs to the bacterial ribosomal protein bL33 family.

The protein is Large ribosomal subunit protein bL33 of Prochlorococcus marinus (strain MIT 9215).